Consider the following 143-residue polypeptide: Mini-ribonuclease 3 (143 aa).

Aspartate 23 is a catalytic residue.

Belongs to the MrnC RNase family. In terms of assembly, homodimer. Mg(2+) serves as cofactor.

Its subcellular location is the cytoplasm. In terms of biological role, involved in correct processing of both the 5' and 3' ends of 23S rRNA precursor. Processes 30S rRNA precursor transcript even in absence of ribonuclease 3 (Rnc); Rnc processes 30S rRNA into smaller rRNA precursors. Cleaves more efficiently on assembled 50S ribosomal subunits. Cleavage is strongly stimulated by ribosomal protein L3 (RplC); 20-30% DMSO can replace RplC, suggesting RplC may alter rRNA conformation. This Bacillus subtilis (strain 168) protein is Mini-ribonuclease 3 (mrnC).